The sequence spans 1003 residues: Translation initiation factor IF-2 (1003 aa).

The segment at 36–392 is disordered; the sequence is SSTIEPPVVK…RQKRNEYESM (357 aa). The segment covering 62-151 has biased composition (low complexity); that stretch reads AAKPAAAKPA…PKPAAAAKPA (90 aa). Pro residues-rich tracts occupy residues 178-190 and 213-230; these read DGMP…PAPK and PRPG…PGGG. Composition is skewed to gly residues over residues 231 to 243 and 255 to 271; these read PRPQ…GGQR and GNRG…GPRP. Positions 273-286 are enriched in low complexity; that stretch reads GGPRPQGGSRPQGG. Residues 329 to 372 show a composition bias toward gly residues; sequence GKGGRGGQAGGGAGGGFNRGGGTGGGAGRGGRRGGTAGAFGRPG. The span at 376–385 shows a compositional bias: basic residues; sequence RRGRKSKRQK. The tr-type G domain occupies 498 to 670; that stretch reads KRPPVVTVMG…VCLTADAELD (173 aa). Residues 507–514 form a G1 region; the sequence is GHVDHGKT. 507 to 514 contributes to the GTP binding site; sequence GHVDHGKT. The G2 stretch occupies residues 532-536; it reads GITQG. The tract at residues 557-560 is G3; that stretch reads DTPG. GTP is bound by residues 557–561 and 611–614; these read DTPGH and NKID. The segment at 611–614 is G4; the sequence is NKID. The tract at residues 647–649 is G5; that stretch reads SAK.

Belongs to the TRAFAC class translation factor GTPase superfamily. Classic translation factor GTPase family. IF-2 subfamily.

It is found in the cytoplasm. Its function is as follows. One of the essential components for the initiation of protein synthesis. Protects formylmethionyl-tRNA from spontaneous hydrolysis and promotes its binding to the 30S ribosomal subunits. Also involved in the hydrolysis of GTP during the formation of the 70S ribosomal complex. This Corynebacterium glutamicum (strain R) protein is Translation initiation factor IF-2.